We begin with the raw amino-acid sequence, 855 residues long: DNA mismatch repair protein MutS (855 aa).

613 to 620 (GPNMGGKS) is a binding site for ATP. A disordered region spans residues 795 to 816 (ETTSLPHEVPSQQSGKPASPMQ). Residues 796-816 (TTSLPHEVPSQQSGKPASPMQ) are compositionally biased toward polar residues.

The protein belongs to the DNA mismatch repair MutS family.

Functionally, this protein is involved in the repair of mismatches in DNA. It is possible that it carries out the mismatch recognition step. This protein has a weak ATPase activity. This is DNA mismatch repair protein MutS from Pseudomonas paraeruginosa (strain DSM 24068 / PA7) (Pseudomonas aeruginosa (strain PA7)).